We begin with the raw amino-acid sequence, 174 residues long: Period clock protein (174 aa).

Residues 46–134 form a disordered region; it reads SSEGTGAGTG…GTGTGTGTGT (89 aa). 45 repeat units span residues 49–50, 51–52, 53–54, 55–56, 57–58, 59–60, 61–62, 63–64, 65–66, 67–68, 69–70, 71–72, 73–74, 75–76, 77–78, 79–80, 81–82, 83–84, 85–86, 87–88, 89–90, 91–92, 93–94, 95–96, 97–98, 99–100, 101–102, 103–104, 105–106, 107–108, 109–110, 111–112, 113–114, 115–116, 117–118, 119–120, 121–122, 123–124, 125–126, 127–128, 129–130, 131–132, 133–134, 135–136, and 137–138. The 45 X 2 AA tandem repeats of G-[TA] stretch occupies residues 49 to 138; that stretch reads GTGAGTGTGT…GTGTGTGTGT (90 aa). Residues 50–134 show a composition bias toward gly residues; the sequence is TGAGTGTGTG…GTGTGTGTGT (85 aa).

It localises to the plastid. It is found in the chloroplast. In Acetabularia acetabulum (Mermaid's wine glass), this protein is Period clock protein.